Here is a 608-residue protein sequence, read N- to C-terminus: Chaperone protein DnaK (608 aa).

Thr-174 carries the phosphothreonine; by autocatalysis modification. Residues 493-505 (YEEEDRKRKESAE) are compositionally biased toward basic and acidic residues. Disordered regions lie at residues 493–514 (YEEE…DSMV) and 577–608 (GQAA…DDDK). The segment covering 577 to 590 (GQAAGANPGAQTTG) has biased composition (low complexity). The span at 599–608 (AEYKVVDDDK) shows a compositional bias: basic and acidic residues.

It belongs to the heat shock protein 70 family.

In terms of biological role, acts as a chaperone. The protein is Chaperone protein DnaK of Acetivibrio thermocellus (strain ATCC 27405 / DSM 1237 / JCM 9322 / NBRC 103400 / NCIMB 10682 / NRRL B-4536 / VPI 7372) (Clostridium thermocellum).